The following is a 165-amino-acid chain: Large ribosomal subunit protein uL10 (165 aa).

The protein belongs to the universal ribosomal protein uL10 family. Part of the ribosomal stalk of the 50S ribosomal subunit. The N-terminus interacts with L11 and the large rRNA to form the base of the stalk. The C-terminus forms an elongated spine to which L12 dimers bind in a sequential fashion forming a multimeric L10(L12)X complex.

Forms part of the ribosomal stalk, playing a central role in the interaction of the ribosome with GTP-bound translation factors. This Pectobacterium carotovorum subsp. carotovorum (strain PC1) protein is Large ribosomal subunit protein uL10.